A 60-amino-acid chain; its full sequence is Large ribosomal subunit protein uL30 (60 aa).

It belongs to the universal ribosomal protein uL30 family. In terms of assembly, part of the 50S ribosomal subunit.

The chain is Large ribosomal subunit protein uL30 from Finegoldia magna (strain ATCC 29328 / DSM 20472 / WAL 2508) (Peptostreptococcus magnus).